A 252-amino-acid chain; its full sequence is Ribosomal RNA small subunit methyltransferase J (252 aa).

S-adenosyl-L-methionine-binding positions include 104 to 105 (RD), 120 to 121 (ER), and aspartate 174.

It belongs to the methyltransferase superfamily. RsmJ family.

Its subcellular location is the cytoplasm. It carries out the reaction guanosine(1516) in 16S rRNA + S-adenosyl-L-methionine = N(2)-methylguanosine(1516) in 16S rRNA + S-adenosyl-L-homocysteine + H(+). Specifically methylates the guanosine in position 1516 of 16S rRNA. This Mannheimia succiniciproducens (strain KCTC 0769BP / MBEL55E) protein is Ribosomal RNA small subunit methyltransferase J.